The sequence spans 88 residues: Apolipoprotein C-I (88 aa).

An N-terminal signal peptide occupies residues 1–26 (MRLFLSLPVLVVVLAMVWEGPAPTQA).

This sequence belongs to the apolipoprotein C1 family.

The protein resides in the secreted. In terms of biological role, inhibitor of lipoprotein binding to the low density lipoprotein (LDL) receptor, LDL receptor-related protein, and very low density lipoprotein (VLDL) receptor. Associates with high density lipoproteins (HDL) and the triacylglycerol-rich lipoproteins in the plasma and makes up about 10% of the protein of the VLDL and 2% of that of HDL. Appears to interfere directly with fatty acid uptake and is also the major plasma inhibitor of cholesteryl ester transfer protein (CETP). Binds free fatty acids and reduces their intracellular esterification. Modulates the interaction of APOE with beta-migrating VLDL and inhibits binding of beta-VLDL to the LDL receptor-related protein. This Neomonachus schauinslandi (Hawaiian monk seal) protein is Apolipoprotein C-I (APOC1).